Reading from the N-terminus, the 599-residue chain is Peptidyl-Asp metalloendopeptidase (599 aa).

An N-terminal signal peptide occupies residues 1 to 20 (MKKSLLCSTLALAVASAAQA). Position 164 (histidine 164) interacts with Zn(2+). Glutamate 165 is an active-site residue. Zn(2+)-binding residues include histidine 168 and histidine 174. Residues 265-285 (PTKVPGTVNPGSGGDTPTPPD) are disordered. The CBM-cenC domain maps to 458–583 (YDFESGIGGW…KRAELMILSG (126 aa)).

The protein belongs to the peptidase M72 family. In terms of assembly, interacts with BamI, the product of its coregulated adjacent gene, which inhibits its protease activity. Zn(2+) serves as cofactor. In terms of processing, made as a membrane-associated pre-pro-protein, which is exported to the periplasm with removal of the signal peptide, leading to a protein with a molecular mass of 65 kDa, that likely contains the metzincin domain plus tandem carbohydrate-binding domains. Undergoes processing during export to the extracellular milieu, probably by autocatalysis, yielding a (mature length) 25 kDa protein that most likely corresponds to the metzincin domain only.

Its subcellular location is the secreted. It catalyses the reaction Cleavage of Xaa-|-Asp, Xaa-|-Glu and Xaa-|-cysteic acid bonds.. Is inhibited by BamI, the product of its coregulated adjacent gene. Its function is as follows. Metalloprotease with endopeptidase activity. Specifically cleaves on the N-terminal side of aspartyl, glutamyl and cysteic acid residues. Mep72 appears to be a secreted biofilm-specific regulator that affects the processing of a very specific subset of virulence factors exported by the type III secretion machinery as well as flagellar proteins. Binds directly to ExoS and PcrV and affects the processing of these proteins in the biofilm secretome, but contrary to expectation, Mep72 seems to protect these targets against proteolytic processing/degradation. The polypeptide is Peptidyl-Asp metalloendopeptidase (Pseudomonas aeruginosa (strain ATCC 15692 / DSM 22644 / CIP 104116 / JCM 14847 / LMG 12228 / 1C / PRS 101 / PAO1)).